We begin with the raw amino-acid sequence, 137 residues long: Large ribosomal subunit protein uL16 (137 aa).

It belongs to the universal ribosomal protein uL16 family. In terms of assembly, part of the 50S ribosomal subunit.

Its function is as follows. Binds 23S rRNA and is also seen to make contacts with the A and possibly P site tRNAs. This is Large ribosomal subunit protein uL16 from Beijerinckia indica subsp. indica (strain ATCC 9039 / DSM 1715 / NCIMB 8712).